The primary structure comprises 331 residues: NADH-cytochrome b5 reductase 2 (331 aa).

The chain crosses the membrane as a helical span at residues 36–56; the sequence is VGILIASAVGMAGFGTYFMFG. Residues 80 to 185 form the FAD-binding FR-type domain; it reads KGFVSLQLDD…KGPLPKYEWS (106 aa). Residue 188-223 coordinates FAD; that stretch reads KHPHVAMIAGGTGITPMYQIMRAIFKNPADKTKVTL.

It belongs to the flavoprotein pyridine nucleotide cytochrome reductase family. FAD is required as a cofactor.

It localises to the mitochondrion outer membrane. It carries out the reaction 2 Fe(III)-[cytochrome b5] + NADH = 2 Fe(II)-[cytochrome b5] + NAD(+) + H(+). Its function is as follows. May mediate the reduction of outer membrane cytochrome b5. The sequence is that of NADH-cytochrome b5 reductase 2 (MCR1) from Pyricularia oryzae (strain 70-15 / ATCC MYA-4617 / FGSC 8958) (Rice blast fungus).